The primary structure comprises 154 residues: MGLSDGEWQIVLNIWGKVETDLAGHGQEVLIRLFKNHPETLDKFDKFKHLKTEDEMKGSEDLKKHGNTVLTALGGILKKKGHHEAELKPLAQSHATKHKIPVKYLEFISDAIIQVLQNKHSGDFHADTEAAMKKALELFRNDIAAKYKELGFQG.

Positions 2–148 (GLSDGEWQIV…FRNDIAAKYK (147 aa)) constitute a Globin domain. Phosphoserine is present on serine 4. Histidine 65 contacts nitrite. Residue histidine 65 coordinates O2. Residue threonine 68 is modified to Phosphothreonine. Histidine 94 is a heme b binding site.

Belongs to the globin family. In terms of assembly, monomeric.

Its subcellular location is the cytoplasm. The protein resides in the sarcoplasm. The catalysed reaction is Fe(III)-heme b-[protein] + nitric oxide + H2O = Fe(II)-heme b-[protein] + nitrite + 2 H(+). It catalyses the reaction H2O2 + AH2 = A + 2 H2O. In terms of biological role, monomeric heme protein which primary function is to store oxygen and facilitate its diffusion within muscle tissues. Reversibly binds oxygen through a pentacoordinated heme iron and enables its timely and efficient release as needed during periods of heightened demand. Depending on the oxidative conditions of tissues and cells, and in addition to its ability to bind oxygen, it also has a nitrite reductase activity whereby it regulates the production of bioactive nitric oxide. Under stress conditions, like hypoxia and anoxia, it also protects cells against reactive oxygen species thanks to its pseudoperoxidase activity. The polypeptide is Myoglobin (MB) (Lycaon pictus (African wild dog)).